A 630-amino-acid polypeptide reads, in one-letter code: Transposase B from transposon PsiTn554 (630 aa).

In terms of domain architecture, Core-binding (CB) spans 216–302 (TYFKQLVKRY…ILEGLFSTLH (87 aa)). The Tyr recombinase domain maps to 326–513 (AKPRFIDEFV…FDETLKNEFT (188 aa)). Active-site residues include Arg363, Lys391, His465, Arg468, and His491. The O-(3'-phospho-DNA)-tyrosine intermediate role is filled by Tyr500.

Belongs to the 'phage' integrase family.

The polypeptide is Transposase B from transposon PsiTn554 (tnpB) (Staphylococcus aureus).